Here is a 264-residue protein sequence, read N- to C-terminus: Regulatory protein RecX (264 aa).

It belongs to the RecX family.

It localises to the cytoplasm. Its function is as follows. Negatively modulates RecA activity. This is Regulatory protein RecX from Bacillus subtilis (strain 168).